The following is a 694-amino-acid chain: Threonine--tRNA ligase (694 aa).

The 67-residue stretch at N8–P74 folds into the TGS domain. A catalytic region spans residues D273–P579. Residues C378, H429, and H556 each coordinate Zn(2+).

The protein belongs to the class-II aminoacyl-tRNA synthetase family. Homodimer. It depends on Zn(2+) as a cofactor.

It localises to the cytoplasm. It catalyses the reaction tRNA(Thr) + L-threonine + ATP = L-threonyl-tRNA(Thr) + AMP + diphosphate + H(+). Catalyzes the attachment of threonine to tRNA(Thr) in a two-step reaction: L-threonine is first activated by ATP to form Thr-AMP and then transferred to the acceptor end of tRNA(Thr). Also edits incorrectly charged L-seryl-tRNA(Thr). This chain is Threonine--tRNA ligase, found in Corynebacterium efficiens (strain DSM 44549 / YS-314 / AJ 12310 / JCM 11189 / NBRC 100395).